Reading from the N-terminus, the 256-residue chain is tRNA (guanine-N(7)-)-methyltransferase (256 aa).

Residues 1 to 43 (MDVDPVNSEMELDNKPTCETVPGLPQKKHYRQRAHSNPHSDHD) form a disordered region. Over residues 26 to 36 (QKKHYRQRAHS) the composition is skewed to basic residues. S-adenosyl-L-methionine is bound by residues G74, 97–98 (EI), 132–133 (NA), and L152. D155 is a catalytic residue. An S-adenosyl-L-methionine-binding site is contributed by 230–232 (TEE).

Belongs to the class I-like SAM-binding methyltransferase superfamily. TrmB family.

The protein localises to the nucleus. It catalyses the reaction guanosine(46) in tRNA + S-adenosyl-L-methionine = N(7)-methylguanosine(46) in tRNA + S-adenosyl-L-homocysteine. It functions in the pathway tRNA modification; N(7)-methylguanine-tRNA biosynthesis. Its function is as follows. Catalyzes the formation of N(7)-methylguanine at position 46 (m7G46) in tRNA. This chain is tRNA (guanine-N(7)-)-methyltransferase, found in Caenorhabditis briggsae.